A 638-amino-acid chain; its full sequence is Chaperone protein DnaK (638 aa).

T199 bears the Phosphothreonine; by autocatalysis mark. Over residues 603–618 the composition is skewed to low complexity; the sequence is YAQPGAEAGAEQQGSA. The interval 603-638 is disordered; that stretch reads YAQPGAEAGAEQQGSANNADDDIVDAEFEEVNDDKK. The span at 621–638 shows a compositional bias: acidic residues; it reads ADDDIVDAEFEEVNDDKK.

This sequence belongs to the heat shock protein 70 family.

Its function is as follows. Acts as a chaperone. This chain is Chaperone protein DnaK, found in Hydrogenovibrio crunogenus (strain DSM 25203 / XCL-2) (Thiomicrospira crunogena).